The following is a 364-amino-acid chain: Glutamate 5-kinase (364 aa).

Lys7 is a binding site for ATP. Residues Ser47, Asp134, and Asn146 each contribute to the substrate site. ATP is bound by residues 166-167 (TD) and 209-215 (TGGIKTK). Residues 274 to 349 (QGTLHVDDGA…NRIKSTQYPV (76 aa)) enclose the PUA domain.

This sequence belongs to the glutamate 5-kinase family.

Its subcellular location is the cytoplasm. It catalyses the reaction L-glutamate + ATP = L-glutamyl 5-phosphate + ADP. The protein operates within amino-acid biosynthesis; L-proline biosynthesis; L-glutamate 5-semialdehyde from L-glutamate: step 1/2. Its function is as follows. Catalyzes the transfer of a phosphate group to glutamate to form L-glutamate 5-phosphate. The sequence is that of Glutamate 5-kinase from Prochlorococcus marinus (strain SARG / CCMP1375 / SS120).